A 74-amino-acid polypeptide reads, in one-letter code: Brevinin-2CG1 (74 aa).

A signal peptide spans 1-22 (MFTMKKSMLVLFFLGTISLSLC). A propeptide spans 23–39 (EEERNADEDDGEMTEEV) (removed in mature form). The cysteines at positions 68 and 74 are disulfide-linked.

Expressed by the skin glands.

The protein resides in the secreted. Functionally, antimicrobial peptide active against a variety of Gram-positive and some Gram-negative bacterial strains. Has antifungal activity against a slime mold isolate. Has hemolytic activity against human erythrocytes. The polypeptide is Brevinin-2CG1 (Amolops chunganensis (Chungan torrent frog)).